The primary structure comprises 397 residues: MDQGTVDSPVTLVIKAPNQKYDDQTINCFLNWTVEKLKKHISNVYPSKPLSKDQRLVYSGRLLQDHLQLRDVLRKQDEYHMVHLVCASRSPPSSPTSDSHFSTTDSSSSTSDSAGPSLSSTPSQEAQANSDGLRHRGNPAATHGLNPAPTGVMQRPEGMPLPMQGGPAAGFPTHPMYMPMQMFWWQQMYARHYYVQYQAAIAASRASSVAPSPSLSAGPATQPVQPNEPAAPMGPNPAPEDRPANPNIQMNAQGGAMLNDDELNRDWLDWMYTVSRAAILLSIVYFYSSFGRFVMVIGAMLLVYLHQAGWFPFRAELQNPRAEEGAQDEADQNQDMQEMERMMDEGIEDDEGDSGEEGPDDPMNPGPHQPGFLSATWSFISTFFTSLIPEGPPQAAN.

In terms of domain architecture, Ubiquitin-like spans 10–89 (VTLVIKAPNQ…HMVHLVCASR (80 aa)). Disordered regions lie at residues 87 to 166 (ASRS…MQGG) and 210 to 246 (APSP…PANP). 2 stretches are compositionally biased toward low complexity: residues 88–123 (SRSP…STPS) and 210–220 (APSPSLSAGPA). A helical membrane pass occupies residues 293–313 (FVMVIGAMLLVYLHQAGWFPF). The interval 344–373 (DEGIEDDEGDSGEEGPDDPMNPGPHQPGFL) is disordered. Positions 345–360 (EGIEDDEGDSGEEGPD) are enriched in acidic residues.

The protein localises to the membrane. In terms of biological role, could be involved in the unfolded protein response (UPR) pathway. The polypeptide is Homocysteine-responsive endoplasmic reticulum-resident ubiquitin-like domain member 2 protein (herpud2) (Danio rerio (Zebrafish)).